Consider the following 67-residue polypeptide: uncharacterized protein (67 aa).

The stretch at 17–47 (AASLQELEKKINTQIENNKAIMLRVKSVSHQ) forms a coiled coil.

This is an uncharacterized protein from Bacillus subtilis (strain 168).